The sequence spans 458 residues: Ammonium transporter Rh type B (458 aa).

Residues 1–13 (MAKSPRRVAGRRL) are Cytoplasmic-facing. The helical transmembrane segment at 14 to 34 (LLPLLCLFFQGATAILFAIFV) threads the bilayer. The Extracellular segment spans residues 35 to 61 (RYDQQTDAALWHGGNHSNADNEFYFRY). Residue Asn49 is glycosylated (N-linked (GlcNAc...) asparagine). A helical membrane pass occupies residues 62 to 82 (PSFQDVHAMVFVGFGFLMVFL). Residues 83–86 (QRYG) are Cytoplasmic-facing. Residues 87–107 (YSSLGFTFLLGAFALQWATLV) traverse the membrane as a helical segment. Over 108-124 (QGFLHSFHGGHIHVGME) the chain is Extracellular. A helical transmembrane segment spans residues 125 to 145 (SLINADFCAGAVLISFGAVLG). Over 146-149 (KTGP) the chain is Cytoplasmic. Residues 150 to 170 (AQLLLMALLEVALFGLNEFVL) traverse the membrane as a helical segment. Topologically, residues 171-178 (LCLLGVRD) are extracellular. A helical membrane pass occupies residues 179 to 201 (AGGSMTIHTFGAYFGLVLSRVLY). At 202 to 219 (RPHLEKSQHRQGSVYHSD) the chain is on the cytoplasmic side. The helical transmembrane segment at 220–240 (LFAMIGTIFLWIFWPSFNSAL) threads the bilayer. The Extracellular portion of the chain corresponds to 241 to 251 (TSRGDGQPRTA). A helical membrane pass occupies residues 252–272 (LNTYYSLTASTLSTFALSALV). The Cytoplasmic segment spans residues 273–282 (GKDGRLDMVH). A helical membrane pass occupies residues 283–303 (VQNAALAGGVVVGTASEMMLT). A topological domain (extracellular) is located at residue Pro304. A helical transmembrane segment spans residues 305–325 (FGALAAGCLAGAISTLGYKFF). Topologically, residues 326–346 (TPILESKLKIQDTCGVHNLHG) are cytoplasmic. The chain crosses the membrane as a helical span at residues 347–367 (MPGVLGALLGALMTGLTTHEA). The Extracellular portion of the chain corresponds to 368–393 (YGDGLQSVFPLIAEGQRSATSQAIYQ). A helical membrane pass occupies residues 394-414 (LFGLSVTLLFASAGGVLGGLL). Residues 415–458 (LKLPFLDAPPDSQCYEDQMCWEVPGEHGYEAQEALRVEEPDTEA) are Cytoplasmic-facing. The segment at 416-424 (KLPFLDAPP) is interaction with ANK3. The Basolateral sorting signal motif lies at 429–432 (YEDQ).

It belongs to the ammonium transporter (TC 2.A.49) family. Rh subfamily. Interacts (via C-terminus) with ANK2 and ANK3; required for targeting to the basolateral membrane. N-glycosylated.

Its subcellular location is the cell membrane. The protein resides in the basolateral cell membrane. It carries out the reaction NH4(+)(in) = NH4(+)(out). It catalyses the reaction methylamine(out) = methylamine(in). The catalysed reaction is CO2(out) = CO2(in). Its function is as follows. Ammonium transporter involved in the maintenance of acid-base homeostasis. Transports ammonium and its related derivative methylammonium across the basolateral plasma membrane of epithelial cells likely contributing to renal transepithelial ammonia transport and ammonia metabolism. May transport either NH4(+) or NH3 ammonia species predominantly mediating an electrogenic NH4(+) transport. May act as a CO2 channel providing for renal acid secretion. This chain is Ammonium transporter Rh type B (RHBG), found in Oryctolagus cuniculus (Rabbit).